Reading from the N-terminus, the 396-residue chain is Proton-coupled antiporter flippase LtaA (396 aa).

A run of 12 helical transmembrane segments spans residues 15–34, 46–73, 80–99, 105–126, 138–159, 165–184, 211–231, 243–263, 275–297, 303–326, 338–358, and 370–390; these read FILMLIILFLMEFARGMYIL, IAVAITSLAFSIHFIADASTNFVIGFLL, IVLTTGFILAFTSLFLVIWF, VIIFSAMMLGIAVSPIWVIMLS, GYVYFSWLLGLLVGMVFMNLLI, RFAFMMSLVVLIAWILYYFV, LLLFPGILLQGAAIAALVPIL, TIEYTVAIIIGGIGCAVSMLF, FMYGVILSGFILYMILIFTLSMI, LWIIALAIGLMYGILLPAWNTFMA, WGVFNSIQGFGSMIGPLFGGL, and FYFSALIFLVLAVFYGSYFIV.

It belongs to the major facilitator superfamily. LtaA family.

It localises to the cell membrane. It functions in the pathway cell wall biogenesis; lipoteichoic acid biosynthesis. Functionally, proton-coupled antiporter flippase that catalyzes the translocation, from the inner to the outer leaflet of the cell membrane, of the lipid-linked disaccharide (anchor-LLD) that anchors lipoteichoic acids (LTA) to the cell membrane. The sequence is that of Proton-coupled antiporter flippase LtaA (ltaA) from Staphylococcus aureus (strain USA300).